The sequence spans 210 residues: uncharacterized protein (210 aa).

Disordered stretches follow at residues 1–21 and 168–210; these read MHRL…TDAI and EALQ…STAQ. A coiled-coil region spans residues 21–175; sequence IDSLDKRSDS…ELEALQQESS (155 aa). The segment covering 174–184 has biased composition (polar residues); it reads SSWLGDQSTAE.

This sequence belongs to the SNF7 family.

This is an uncharacterized protein from Schizosaccharomyces pombe (strain 972 / ATCC 24843) (Fission yeast).